Consider the following 358-residue polypeptide: uncharacterized protein (358 aa).

The protein belongs to the methyltransferase superfamily.

This is an uncharacterized protein from Mycobacterium tuberculosis (strain CDC 1551 / Oshkosh).